Consider the following 92-residue polypeptide: Integration host factor subunit beta (92 aa).

Belongs to the bacterial histone-like protein family. In terms of assembly, heterodimer of an alpha and a beta chain.

This protein is one of the two subunits of integration host factor, a specific DNA-binding protein that functions in genetic recombination as well as in transcriptional and translational control. This Azotobacter vinelandii (strain DJ / ATCC BAA-1303) protein is Integration host factor subunit beta.